Reading from the N-terminus, the 1142-residue chain is Auxin response factor 5 (1142 aa).

The TF-B3 DNA-binding region spans 148-250; sequence FCKTLTASDT…QLLLGIRRAN (103 aa). Residues 1009–1093 enclose the PB1 domain; that stretch reads RTFTKVYKRG…RCIRILSPQE (85 aa). The interval 1114–1142 is disordered; it reads SSSDGVNGWRPRCDQNPGNPSIGPYDQFE.

The protein belongs to the ARF family. In terms of assembly, homodimers and heterodimers. In terms of tissue distribution, expressed in roots, culms, leaves and young panicles.

It localises to the nucleus. In terms of biological role, auxin response factors (ARFs) are transcriptional factors that bind specifically to the DNA sequence 5'-TGTCTC-3' found in the auxin-responsive promoter elements (AuxREs). The chain is Auxin response factor 5 (ARF5) from Oryza sativa subsp. japonica (Rice).